A 122-amino-acid chain; its full sequence is Large ribosomal subunit protein uL14 (122 aa).

It belongs to the universal ribosomal protein uL14 family. In terms of assembly, part of the 50S ribosomal subunit. Forms a cluster with proteins L3 and L19. In the 70S ribosome, L14 and L19 interact and together make contacts with the 16S rRNA in bridges B5 and B8.

In terms of biological role, binds to 23S rRNA. Forms part of two intersubunit bridges in the 70S ribosome. This is Large ribosomal subunit protein uL14 from Desulforudis audaxviator (strain MP104C).